The following is a 115-amino-acid chain: UPF0102 protein NGO_1987 (115 aa).

This sequence belongs to the UPF0102 family.

The chain is UPF0102 protein NGO_1987 from Neisseria gonorrhoeae (strain ATCC 700825 / FA 1090).